The following is a 265-amino-acid chain: Esterase claE (265 aa).

Active-site charge relay system residues include Ser-121, Asp-211, and His-239.

This sequence belongs to the LovG family.

It participates in secondary metabolite biosynthesis. Its function is as follows. Esterase; part of the cla gene cluster that produces clavatol and ortho-quinone methide. The clavatol biosynthesis cluster cla and the terrestric acid cluster tra are both involved in the production of peniphenones and penilactones. The non-reducing PKS claF is responsible for the formation of clavatol from successive condensations of 3 malonyl-CoA units, presumably with a simple acetyl-CoA starter unit, and 2 methylation steps. The esterase claE probably collaborates with claF by catalyzing the hydrolysis of ACP-bound acyl intermediates to free the ACP from stalled intermediates. The clavatol oxidase claD then converts clavatol to hydroxyclavatol. Spontaneous dehydration of hydroxyclavatol leads to the accumulation of the highly active ortho-quinone methide. On the other hand, the PKS-NRPS hybrid traA is involved in the formation of crustosic acid, with the help of traB and traD. The polyketide synthase module (PKS) of traA is responsible for the synthesis of the polyketide backbone via the condensation of an acetyl-CoA starter unit with 3 malonyl-CoA units. The downstream nonribosomal peptide synthetase (NRPS) module then amidates the carboxyl end of the polyketide with L-malic acid. Because traA lacks a designated enoylreductase (ER) domain, the required activity is provided the enoyl reductase traG. Crustosic acid undergoes decarboxylation and isomerization to the terrestric acid, catalyzed by the 2-oxoglutarate-dependent dioxygenase traH. Both acids are further converted to the 2 gamma-butyrolactones (R)-5-methyltetronic acid and (S)-5-carboxylmethyltetronic acid, with involvement of the cytochrome P450 monooxygenase claJ. Spontaneous addition of the methide to these gamma-butyrolactones leads to peniphenone D and penilactone D, which undergo again stereospecific attacking by methide to give penilactones A and B. This chain is Esterase claE, found in Penicillium crustosum (Blue mold fungus).